The following is a 510-amino-acid chain: Beta-glucosidase 34 (510 aa).

The first 26 residues, 1-26, serve as a signal peptide directing secretion; sequence MGNGGRCMVEVVILLVLMAMSQGCDA. An N-linked (GlcNAc...) asparagine glycan is attached at asparagine 28. Residue glutamine 52 participates in a beta-D-glucoside binding. Residue asparagine 120 is glycosylated (N-linked (GlcNAc...) asparagine). Residues histidine 153 and 198–199 each bind a beta-D-glucoside; that span reads NE. The Proton donor role is filled by glutamate 199. A disulfide bridge links cysteine 218 with cysteine 226. Residues asparagine 279 and asparagine 331 are each glycosylated (N-linked (GlcNAc...) asparagine). Tyrosine 342 contributes to the a beta-D-glucoside binding site. A glycan (N-linked (GlcNAc...) asparagine) is linked at asparagine 360. Residues glutamate 415, tryptophan 465, 472-473, and phenylalanine 481 each bind a beta-D-glucoside; that span reads EW. Glutamate 415 (nucleophile) is an active-site residue.

Belongs to the glycosyl hydrolase 1 family.

The catalysed reaction is Hydrolysis of terminal, non-reducing beta-D-glucosyl residues with release of beta-D-glucose.. This is Beta-glucosidase 34 (BGLU34) from Oryza sativa subsp. japonica (Rice).